The chain runs to 102 residues: Small ribosomal subunit protein uS10 (102 aa).

The disordered stretch occupies residues 37–61; that stretch reads PIPLPTKSLKITTRKSTDGEGSSSF.

The protein belongs to the universal ribosomal protein uS10 family. Part of the 30S ribosomal subunit.

Involved in the binding of tRNA to the ribosomes. In Methanococcus vannielii (strain ATCC 35089 / DSM 1224 / JCM 13029 / OCM 148 / SB), this protein is Small ribosomal subunit protein uS10.